The chain runs to 249 residues: Nicotinamide/nicotinic acid mononucleotide adenylyltransferase (249 aa).

2 residues coordinate NAD(+): S34 and F35. Residues H42 and K75 each contribute to the ATP site. The NAD(+) site is built by T112, G141, D143, W154, R173, and N204. 209–210 (SR) contacts ATP.

The protein belongs to the eukaryotic NMN adenylyltransferase family. It depends on a divalent metal cation as a cofactor.

The enzyme catalyses beta-nicotinamide D-ribonucleotide + ATP + H(+) = diphosphate + NAD(+). It catalyses the reaction nicotinate beta-D-ribonucleotide + ATP + H(+) = deamido-NAD(+) + diphosphate. Its pathway is cofactor biosynthesis; NAD(+) biosynthesis; deamido-NAD(+) from nicotinate D-ribonucleotide: step 1/1. The protein operates within cofactor biosynthesis; NAD(+) biosynthesis; NAD(+) from nicotinamide D-ribonucleotide: step 1/1. Functionally, catalyzes the formation of NAD(+) from nicotinamide mononucleotide (NMN) and ATP. Can also use the deamidated form; nicotinic acid mononucleotide (NaMN) as substrate. This Oryza sativa subsp. japonica (Rice) protein is Nicotinamide/nicotinic acid mononucleotide adenylyltransferase.